Here is a 385-residue protein sequence, read N- to C-terminus: Pre-mRNA-splicing factor slt-11 (385 aa).

Positions 157 to 233 (RKGREVDEEG…PPGPKDWLPP (77 aa)) are disordered. A compositionally biased stretch (low complexity) spans 171 to 187 (GSSSGAGRATGGNPAVG). The 74-residue stretch at 239–312 (MSLFVTGIED…CPLRVRWSVP (74 aa)) folds into the RRM domain. The span at 320 to 331 (KEQRSEMLRDGR) shows a compositional bias: basic and acidic residues. The segment at 320 to 370 (KEQRSEMLRDGRSAFGSGQKTGGQKAIGGQNAQGGASGAQKDDASNLTIAA) is disordered.

It belongs to the SLT11 family. In terms of assembly, associated with the spliceosome.

It localises to the nucleus. In terms of biological role, involved in pre-mRNA splicing. Facilitates the cooperative formation of U2/U6 helix II in association with stem II in the spliceosome. Binds to RNA. This Neurospora crassa (strain ATCC 24698 / 74-OR23-1A / CBS 708.71 / DSM 1257 / FGSC 987) protein is Pre-mRNA-splicing factor slt-11 (slt-11).